A 430-amino-acid chain; its full sequence is Dihydrolipoyllysine-residue acetyltransferase component of pyruvate dehydrogenase complex (430 aa).

Residues 2-77 (AFEFRLPDIG…VVGDVIVKID (76 aa)) form the Lipoyl-binding domain. Residue Lys-43 is modified to N6-lipoyllysine. Residues 80–122 (DAEDMQFKGHDDDSSSKEEPAKEEAPAEQAPVATQTEEVDENR) are disordered. Positions 84-104 (MQFKGHDDDSSSKEEPAKEEA) are enriched in basic and acidic residues. A Peripheral subunit-binding (PSBD) domain is found at 125–162 (KAMPSVRKYAREKGVNIKAVSGSGKNGRITKEDVDAYL). Positions 165 to 199 (GAPTASNESAASATNEEVAETPAAPAAVSLEGDFP) are disordered. The segment covering 168 to 192 (TASNESAASATNEEVAETPAAPAAV) has biased composition (low complexity). His-401 is a catalytic residue.

It belongs to the 2-oxoacid dehydrogenase family. Forms a 24-polypeptide structural core with octahedral symmetry. Requires (R)-lipoate as cofactor.

It carries out the reaction N(6)-[(R)-dihydrolipoyl]-L-lysyl-[protein] + acetyl-CoA = N(6)-[(R)-S(8)-acetyldihydrolipoyl]-L-lysyl-[protein] + CoA. Functionally, the pyruvate dehydrogenase complex catalyzes the overall conversion of pyruvate to acetyl-CoA and CO(2). It contains multiple copies of three enzymatic components: pyruvate dehydrogenase (E1), dihydrolipoamide acetyltransferase (E2) and lipoamide dehydrogenase (E3). This chain is Dihydrolipoyllysine-residue acetyltransferase component of pyruvate dehydrogenase complex (pdhC), found in Staphylococcus aureus (strain MRSA252).